A 770-amino-acid chain; its full sequence is DEAD-box ATP-dependent RNA helicase 24 (770 aa).

Residues Met1 to Val106 are disordered. Over residues Arg14–Pro26 the composition is skewed to polar residues. Positions Asp34 to Phe43 are enriched in acidic residues. Positions Ser44–Pro55 are enriched in low complexity. A Q motif motif is present at residues Lys219 to Cys247. Residues Leu250–Val425 enclose the Helicase ATP-binding domain. Residue Ala263–Thr270 participates in ATP binding. Residues Asp373–Asp376 carry the DEAD box motif. The 164-residue stretch at Asp436 to Ala599 folds into the Helicase C-terminal domain. The segment covering Arg604–Lys613 has biased composition (basic and acidic residues). Disordered stretches follow at residues Arg604–Gly640, Val683–Phe704, and Leu729–Arg770. Residues Gly621 to Arg635 are compositionally biased toward gly residues. Over residues Val683–Ser697 the composition is skewed to low complexity. The segment covering Thr744 to Glu753 has biased composition (polar residues). Residues Ser754 to Arg770 are compositionally biased toward basic and acidic residues.

The protein belongs to the DEAD box helicase family.

It catalyses the reaction ATP + H2O = ADP + phosphate + H(+). The protein is DEAD-box ATP-dependent RNA helicase 24 of Oryza sativa subsp. japonica (Rice).